The chain runs to 938 residues: AP-2 complex subunit alpha-2 (938 aa).

Residues 11–12 (RG), lysine 43, tyrosine 53, and 57–61 (KYVCK) each bind a 1,2-diacyl-sn-glycero-3-phospho-(1D-myo-inositol-3,4,5-trisphosphate). Residues 616–677 (LKKKKGPSTV…APPVPAGPPP (62 aa)) form a disordered region. Residues 645 to 668 (PALASTSAVSTPSPSADLLGLGAA) are compositionally biased toward low complexity.

This sequence belongs to the adaptor complexes large subunit family. As to quaternary structure, adaptor protein complex 2 (AP-2) is a heterotetramer composed of two large adaptins (alpha-type subunit AP2A1 or AP2A2 and beta-type subunit AP2B1), a medium adaptin (mu-type subunit AP2M1) and a small adaptin (sigma-type subunit AP2S1). Binds clathrin. Binds EPN1, EPS15, AMPH, SNAP91 and BIN1. Interacts with HIP1. Interacts with DGKD. Interacts with DENND1A, DENND1B and DENND1C. Interacts with FCHO1. Interacts with ATAT1; this interaction is required for efficient alpha-tubulin acetylation by ATAT1. Interacts with KIAA1107. Together with AP2B1 and AP2M1, it interacts with ADAM10; this interaction facilitates ADAM10 endocytosis from the plasma membrane during long-term potentiation in hippocampal neurons. Interacts with CLN3 (via dileucine motif). Interacts with ABCB11; this interaction regulates cell membrane expression of ABCB11 through its internalization in a clathrin-dependent manner and its subsequent degradation. Interacts with DNAJC6.

Its subcellular location is the cell membrane. It localises to the membrane. The protein resides in the coated pit. In terms of biological role, component of the adaptor protein complex 2 (AP-2). Adaptor protein complexes function in protein transport via transport vesicles in different membrane traffic pathways. Adaptor protein complexes are vesicle coat components and appear to be involved in cargo selection and vesicle formation. AP-2 is involved in clathrin-dependent endocytosis in which cargo proteins are incorporated into vesicles surrounded by clathrin (clathrin-coated vesicles, CCVs) which are destined for fusion with the early endosome. The clathrin lattice serves as a mechanical scaffold but is itself unable to bind directly to membrane components. Clathrin-associated adaptor protein (AP) complexes which can bind directly to both the clathrin lattice and to the lipid and protein components of membranes are considered to be the major clathrin adaptors contributing the CCV formation. AP-2 also serves as a cargo receptor to selectively sort the membrane proteins involved in receptor-mediated endocytosis. AP-2 seems to play a role in the recycling of synaptic vesicle membranes from the presynaptic surface. AP-2 recognizes Y-X-X-[FILMV] (Y-X-X-Phi) and [ED]-X-X-X-L-[LI] endocytosis signal motifs within the cytosolic tails of transmembrane cargo molecules. AP-2 may also play a role in maintaining normal post-endocytic trafficking through the ARF6-regulated, non-clathrin pathway. During long-term potentiation in hippocampal neurons, AP-2 is responsible for the endocytosis of ADAM10. The AP-2 alpha subunit binds polyphosphoinositide-containing lipids, positioning AP-2 on the membrane. The AP-2 alpha subunit acts via its C-terminal appendage domain as a scaffolding platform for endocytic accessory proteins. The AP-2 alpha and AP-2 sigma subunits are thought to contribute to the recognition of the [ED]-X-X-X-L-[LI] motif. The polypeptide is AP-2 complex subunit alpha-2 (Bos taurus (Bovine)).